Reading from the N-terminus, the 451-residue chain is UDP-N-acetylmuramate--L-alanine ligase (451 aa).

110 to 116 (GTHGKTT) is a binding site for ATP.

It belongs to the MurCDEF family.

It is found in the cytoplasm. It catalyses the reaction UDP-N-acetyl-alpha-D-muramate + L-alanine + ATP = UDP-N-acetyl-alpha-D-muramoyl-L-alanine + ADP + phosphate + H(+). The protein operates within cell wall biogenesis; peptidoglycan biosynthesis. Cell wall formation. The polypeptide is UDP-N-acetylmuramate--L-alanine ligase (Francisella tularensis subsp. tularensis (strain SCHU S4 / Schu 4)).